Consider the following 112-residue polypeptide: Small ribosomal subunit protein bS6 (112 aa).

It belongs to the bacterial ribosomal protein bS6 family.

Functionally, binds together with bS18 to 16S ribosomal RNA. In Chlamydia abortus (strain DSM 27085 / S26/3) (Chlamydophila abortus), this protein is Small ribosomal subunit protein bS6.